Here is a 44-residue protein sequence, read N- to C-terminus: MFKILNTKFVRSAPVVAAIWLSLTAGIIIEFNRFFPDLLFHPMS.

The chain crosses the membrane as a helical span at residues 9-29 (FVRSAPVVAAIWLSLTAGIII).

This sequence belongs to the PsaJ family.

Its subcellular location is the cellular thylakoid membrane. May help in the organization of the PsaE and PsaF subunits. The polypeptide is Photosystem I reaction center subunit IX (Prochlorococcus marinus (strain MIT 9301)).